Reading from the N-terminus, the 435-residue chain is Uracil permease (435 aa).

12 consecutive transmembrane segments (helical) span residues 17–37 (FSWV…TILV), 42–62 (GMSP…YLLI), 67–87 (IPAY…VKAT), 91–111 (GAAM…ALLI), 122–142 (ILPP…LAST), 161–181 (LKHF…AIFL), 191–213 (LIGI…QPVL), 234–254 (VTLG…SEHI), 311–331 (VFSV…GFIG), 336–356 (LISS…FGII), 376–396 (NLII…IQVS), and 399–419 (GFQV…NLIL).

This sequence belongs to the nucleobase:cation symporter-2 (NCS2) (TC 2.A.40) family.

The protein localises to the cell membrane. In terms of biological role, transport of uracil in the cell. The chain is Uracil permease (pyrP) from Bacillus subtilis (strain 168).